Reading from the N-terminus, the 1969-residue chain is TP53-binding protein 1 (1969 aa).

Residues 1 to 24 form a disordered region; sequence MPGEQMDPTGSQLDSDFSQQDTPC. Over residues 8–22 the composition is skewed to polar residues; the sequence is PTGSQLDSDFSQQDT. 3 positions are modified to phosphoserine: Ser30, Ser68, and Ser73. The interval 67–168 is disordered; the sequence is VSNPEQSAVE…DSLAAEDSAS (102 aa). Residues 69 to 85 are compositionally biased toward polar residues; the sequence is NPEQSAVEQGDSNSSFN. Residues 86 to 95 are compositionally biased toward basic and acidic residues; the sequence is EHLKEKKASD. Positions 101 to 110 are enriched in polar residues; the sequence is HLGTSGSISQ. Position 109 is a phosphoserine (Ser109). A compositionally biased stretch (acidic residues) spans 135–148; that stretch reads PEEEKEEEELEEEK. The segment covering 158–168 has biased composition (low complexity); sequence ADSLAAEDSAS. Phosphoserine occurs at positions 169, 179, and 181. Lys220 participates in a covalent cross-link: Glycyl lysine isopeptide (Lys-Gly) (interchain with G-Cter in SUMO1); alternate. Lys220 is covalently cross-linked (Glycyl lysine isopeptide (Lys-Gly) (interchain with G-Cter in SUMO2); alternate). Disordered regions lie at residues 254 to 337, 352 to 599, and 614 to 707; these read EQNL…VSTP, LVQE…CKGR, and DSGS…CPEA. 2 positions are modified to phosphoserine: Ser267 and Ser268. Over residues 277-288 the composition is skewed to basic and acidic residues; that stretch reads ETKEQVPARELL. Positions 294 to 324 are enriched in polar residues; it reads VQPSSEPEVSSTQEDLFDQSSKTASDGCSTP. Ser297 carries the phosphoserine modification. Thr305 is modified (phosphothreonine). Residues Ser368, Ser382, and Ser397 each carry the phosphoserine modification. Over residues 407 to 419 the composition is skewed to basic and acidic residues; it reads QKLHDDEAMETEK. Residues 426–442 are compositionally biased toward polar residues; that stretch reads PAVSPQASTPVSRSTPV. Phosphoserine is present on residues Ser429, Ser452, and Ser464. The segment covering 481 to 490 has biased composition (polar residues); sequence HSSSLTVECS. Basic and acidic residues predominate over residues 491–501; the sequence is KTSESEPKNFT. Residues Ser507, Ser518, Ser523, and Ser525 each carry the phosphoserine modification. Residues 517–528 show a composition bias toward polar residues; the sequence is LSTSEYSQSSKM. Thr543 and Thr548 each carry phosphothreonine. A phosphoserine mark is found at Ser552 and Ser579. Residues 566–582 are compositionally biased toward polar residues; it reads VLVTPSQDDQVEMSQNV. The segment covering 583–599 has biased composition (basic and acidic residues); sequence DKAKEDETEDRGDCKGR. The span at 614–634 shows a compositional bias: polar residues; it reads DSGSQAVPSPATRSEALSSVL. A phosphoserine mark is found at Ser622, Ser627, Ser631, and Ser632. The span at 640 to 649 shows a compositional bias: basic and acidic residues; sequence MDTKEHHPEE. A Phosphothreonine modification is found at Thr662. Positions 666 to 675 are enriched in basic and acidic residues; the sequence is SHREEPKEEP. Phosphoserine occurs at positions 684, 716, 719, and 763. Residues 754-870 are disordered; sequence KEPSPRADVS…DDKQLGPEGA (117 aa). Basic and acidic residues predominate over residues 790 to 818; that stretch reads AENRLDTPEEKRIECDGDSKAETTEKDAV. Ser822 carries the phosphoserine modification. The segment covering 830-839 has biased composition (basic and acidic residues); the sequence is VRDEPVRPDQ. Thr912 is subject to Phosphothreonine. Lys920 is covalently cross-linked (Glycyl lysine isopeptide (Lys-Gly) (interchain with G-Cter in SUMO2)). A disordered region spans residues 927–1017; that stretch reads STPIGISNYP…GSTAIAEPVA (91 aa). A compositionally biased stretch (polar residues) spans 935-949; sequence YPESTIATSDVTSES. The span at 961-975 shows a compositional bias: basic and acidic residues; it reads EKGDSESAPEMDGKL. Ser965 is subject to Phosphoserine. Residue Lys974 forms a Glycyl lysine isopeptide (Lys-Gly) (interchain with G-Cter in SUMO2) linkage. Ser1018 carries the post-translational modification Phosphoserine. Disordered stretches follow at residues 1034-1144, 1178-1231, and 1267-1478; these read QEKE…MDRP, GTST…PHGH, and TEET…DSSS. Residues 1060-1074 are compositionally biased toward basic and acidic residues; the sequence is EEDKERPDVTPKLRQ. Residues Ser1075 and Ser1096 each carry the phosphoserine modification. The span at 1099–1112 shows a compositional bias: low complexity; it reads SQQRASQEQRASQE. At Ser1115 the chain carries Phosphoserine. Residues 1178–1197 are compositionally biased toward polar residues; that stretch reads GTSTAEQNSGKQDATVQTER. Residue Thr1211 is modified to Phosphothreonine. Residues Ser1213 and Ser1216 each carry the phosphoserine modification. Acidic residues predominate over residues 1269–1282; it reads ETEEPIVECQECET. A compositionally biased stretch (low complexity) spans 1295–1326; that stretch reads DLGDISSFSSKASSSHHTSSGTSLSAIHSSGS. Phosphoserine is present on Ser1314. Omega-N-methylarginine is present on Arg1329. Position 1339 is a phosphoserine (Ser1339). Arg1352 carries the post-translational modification Omega-N-methylarginine. Ser1359 bears the Phosphoserine mark. Lys1362 participates in a covalent cross-link: Glycyl lysine isopeptide (Lys-Gly) (interchain with G-Cter in SUMO2). A Phosphoserine modification is found at Ser1365. The GAR motif lies at 1393–1400; it reads RGRGRRGR. A phosphoserine mark is found at Ser1423 and Ser1427. A Glycyl lysine isopeptide (Lys-Gly) (interchain with G-Cter in SUMO1); alternate cross-link involves residue Lys1431. Lys1431 participates in a covalent cross-link: Glycyl lysine isopeptide (Lys-Gly) (interchain with G-Cter in SUMO2); alternate. A phosphoserine mark is found at Ser1457, Ser1459, Ser1470, and Ser1471. The segment covering 1469–1478 has biased composition (low complexity); the sequence is GSSDGLDSSS. A tudor-like region spans residues 1481–1600; that stretch reads NSFVGLRVVA…NRLREQYGLG (120 aa). Residues 1492–1520 form an interaction with dimethylated histone H4 region; sequence WSSNGYFYSGKITRDVGAGKYKLLFDDGY. Residue Lys1560 forms a Glycyl lysine isopeptide (Lys-Gly) (interchain with G-Cter in SUMO1); alternate linkage. A Glycyl lysine isopeptide (Lys-Gly) (interchain with G-Cter in SUMO2); alternate cross-link involves residue Lys1560. The UDR motif lies at 1601–1628; that stretch reads PYEAVTPLTKAADISLDNLVEGKRKRRS. The residue at position 1606 (Thr1606) is a Phosphothreonine. Ser1615, Ser1628, and Ser1632 each carry phosphoserine. Positions 1624–1715 are disordered; that stretch reads RKRRSNISSP…IGEPSVLEEP (92 aa). Residues 1631–1648 are compositionally biased toward low complexity; sequence SSPVTPTAASSSSTTPTR. 2 positions are modified to phosphothreonine: Thr1635 and Thr1645. 3 positions are modified to phosphoserine: Ser1653, Ser1670, and Ser1675. Lys1682 participates in a covalent cross-link: Glycyl lysine isopeptide (Lys-Gly) (interchain with G-Cter in ubiquitin). Residues Ser1698 and Ser1756 each carry the phosphoserine modification. BRCT domains are found at residues 1749-1845 and 1861-1961; these read LDGP…NYLL and PREN…QHPK.

Homoligomer. Interacts with p53/TP53 (via the central domain). Interacts with DCLRE1C. Interacts with histone H2AX and this requires phosphorylation of H2AX on 'Ser-139'. Interacts with histone H4 that has been dimethylated at 'Lys-20' (H4K20me2). Has low affinity for histone H4 containing monomethylated 'Lys-20' (H4K20me1). Does not bind histone H4 containing unmethylated or trimethylated 'Lys-20' (H4K20me3). Has low affinity for histone H3 that has been dimethylated on 'Lys-79'. Has very low affinity for histone H3 that has been monomethylated on 'Lys-79' (in vitro). Does not bind unmethylated histone H3. Interacts with histone H2A monoubiquitinated at 'Lys-15' (H2AK15Ub). Interacts with PWWP3A/EXPAND1. Interacts with CHEK2; modulates CHEK2 phosphorylation at 'Thr-68' in response to infrared. Interacts with MSL1; this interaction may be required for MSL1 DNA repair activity, but not for histone acetyltransferase activity. Interacts (when phosphorylated by ATM) with RIF1. Interacts (via the Tudor-like domain) with NUDT16L1/TIRR; interaction masks the Tudor-like domain and prevents recruitment to chromatin. Interacts with PAXIP1. Interacts with IFI202A. Interacts with SHLD2. Interacts (when phosphorylated) with TOPBP1. Interacts with GFI1; promoting methylation by PRMT1. Interacts with (phosphorylated) DYNLL1; specifically binds DYNLL1 phosphorylated at 'Ser-88' and promotes its recruitment to double stand breaks (DSBs). Post-translationally, phosphorylated at basal level in the absence of DNA damage. Phosphorylated by ATM in response to DNA damage: phosphorylation at different sites promotes interaction with different set of proteins: phosphorylation at the N-terminus by ATM (residues from 11-181) promotes interaction with PAXIP1 and non-homologous end joining (NHEJ) of dysfunctional telomeres. Phosphorylation by ATM at residues that are located more C-terminus (residues 300-650) leads to promote interaction with RIF1. Interaction with RIF1 leads to disrupt interaction with NUDT16L1/TIRR. Phosphorylation at Thr-1606 and Ser-1615 in the UDR motif blocks interaction with H2AK15ub. Dephosphorylated by PPP4C. Hyperphosphorylation during mitosis correlates with its exclusion from chromatin and DNA lesions. Hyperphosphorylated in an ATR-dependent manner in response to DNA damage induced by UV irradiation. Dephosphorylated by PPP5C. Phosphorylation at Ser-368 and Thr-662 promotes interaction with TOPBP1. Phosphorylated by VRK1. Asymmetrically dimethylated on Arg residues by PRMT1. Methylation is required for DNA binding. In terms of processing, monoubiquitinated at Lys-1682 by MSL2 is reponse to DNA damage, leading to its stabilization.

The protein resides in the nucleus. The protein localises to the chromosome. Its subcellular location is the centromere. It localises to the kinetochore. Its function is as follows. Double-strand break (DSB) repair protein involved in response to DNA damage, telomere dynamics and class-switch recombination (CSR) during antibody genesis. Plays a key role in the repair of double-strand DNA breaks (DSBs) in response to DNA damage by promoting non-homologous end joining (NHEJ)-mediated repair of DSBs and specifically counteracting the function of the homologous recombination (HR) repair protein BRCA1. In response to DSBs, phosphorylation by ATM promotes interaction with RIF1 and dissociation from NUDT16L1/TIRR, leading to recruitment to DSBs sites. Recruited to DSBs sites by recognizing and binding histone H2A monoubiquitinated at 'Lys-15' (H2AK15Ub) and histone H4 dimethylated at 'Lys-20' (H4K20me2), two histone marks that are present at DSBs sites. Required for immunoglobulin class-switch recombination (CSR) during antibody genesis, a process that involves the generation of DNA DSBs. Participates in the repair and the orientation of the broken DNA ends during CSR. In contrast, it is not required for classic NHEJ and V(D)J recombination. Promotes NHEJ of dysfunctional telomeres. The protein is TP53-binding protein 1 of Mus musculus (Mouse).